Here is a 2512-residue protein sequence, read N- to C-terminus: RNA replication protein (2512 aa).

An Alphavirus-like MT domain is found at 156–367 (RLTFSKNVAH…RLDVYLDKFL (212 aa)). The OTU domain maps to 683 to 803 (LTVIQVPGDG…HSHYSLLVPC (121 aa)). Residues 1520 to 1696 (AIYTSLVAHN…DFVNTEARPL (177 aa)) form the (+)RNA virus helicase ATP-binding domain. One can recognise a (+)RNA virus helicase C-terminal domain in the interval 1697 to 1874 (ARTFRSPPDV…HLSLSGGGTT (178 aa)). One can recognise a RdRp catalytic domain in the interval 2265–2378 (FDSLEIDIKK…VGEKRDLQCD (114 aa)).

The enzyme catalyses ATP + H2O = ADP + phosphate + H(+). It catalyses the reaction RNA(n) + a ribonucleoside 5'-triphosphate = RNA(n+1) + diphosphate. RNA replication. The central part of this protein possibly functions as an ATP-binding helicase (Potential). This Citrus leprosis virus C (isolate Citrus sinesis/Brazil/Cordeiropolis/2003) (CiLV-C) protein is RNA replication protein.